The following is a 677-amino-acid chain: Methionine--tRNA ligase (677 aa).

Residues 15-25 (PYANGSIHLGH) carry the 'HIGH' region motif. Zn(2+)-binding residues include Cys146, Cys149, Cys159, and Cys162. Residues 333–337 (KMSKS) carry the 'KMSKS' region motif. Lys336 contributes to the ATP binding site. In terms of domain architecture, tRNA-binding spans 575 to 677 (DFAKVDLRVA…DGAKPGQQVK (103 aa)).

It belongs to the class-I aminoacyl-tRNA synthetase family. MetG type 1 subfamily. In terms of assembly, homodimer. The cofactor is Zn(2+).

Its subcellular location is the cytoplasm. The enzyme catalyses tRNA(Met) + L-methionine + ATP = L-methionyl-tRNA(Met) + AMP + diphosphate. Its function is as follows. Is required not only for elongation of protein synthesis but also for the initiation of all mRNA translation through initiator tRNA(fMet) aminoacylation. In Klebsiella pneumoniae subsp. pneumoniae (strain ATCC 700721 / MGH 78578), this protein is Methionine--tRNA ligase.